Here is a 479-residue protein sequence, read N- to C-terminus: Catalase A (479 aa).

The active site involves His63. Tyr346 is a binding site for heme.

This sequence belongs to the catalase family. It depends on heme as a cofactor.

The protein resides in the peroxisome matrix. It catalyses the reaction 2 H2O2 = O2 + 2 H2O. Its function is as follows. Catalyzes the degradation of hydrogen peroxide (H(2)O(2)) generated by peroxisomal oxidases to water and oxygen, thereby protecting cells from the toxic effects of hydrogen peroxide. In Botryotinia fuckeliana (Noble rot fungus), this protein is Catalase A (catA).